Reading from the N-terminus, the 142-residue chain is Putative pre-16S rRNA nuclease (142 aa).

The protein belongs to the YqgF nuclease family.

It localises to the cytoplasm. Functionally, could be a nuclease involved in processing of the 5'-end of pre-16S rRNA. The protein is Putative pre-16S rRNA nuclease of Staphylococcus saprophyticus subsp. saprophyticus (strain ATCC 15305 / DSM 20229 / NCIMB 8711 / NCTC 7292 / S-41).